Reading from the N-terminus, the 248-residue chain is 23S rRNA (guanosine(2553)-2'-O)-methyltransferase RlmP (248 aa).

Positions 123, 204, 224, and 233 each coordinate S-adenosyl-L-methionine.

Belongs to the class IV-like SAM-binding methyltransferase superfamily. RNA methyltransferase TrmH family. Homodimer.

Its subcellular location is the cytoplasm. The catalysed reaction is guanosine(2553) in 23S rRNA + S-adenosyl-L-methionine = 2'-O-methylguanosine(2553) in 23S rRNA + S-adenosyl-L-homocysteine + H(+). Its function is as follows. Specifically methylates the ribose of guanosine 2553 (G2553) in 23S rRNA. When the target G2553 is mutated, is able to methylate the ribose of adenosine, but it cannot methylate cytidine nor uridine. Modifies free 23S rRNA but not the fully assembled ribosome nor the 50S subunit, suggesting that the modification occurs early during ribosome biogenesis. The chain is 23S rRNA (guanosine(2553)-2'-O)-methyltransferase RlmP from Bacillus subtilis (strain 168).